The following is a 90-amino-acid chain: Small ribosomal subunit protein bS16 (90 aa).

Belongs to the bacterial ribosomal protein bS16 family.

The protein is Small ribosomal subunit protein bS16 of Lactococcus lactis subsp. cremoris (strain MG1363).